The following is a 205-amino-acid chain: TATA-box-binding protein (205 aa).

Tandem repeats lie at residues 27–103 (LQNI…ARII) and 117–194 (IQNI…YPVL).

The protein belongs to the TBP family. In terms of assembly, belongs to the TFIID complex together with the TBP-associated factors (TAFs). Binds DNA as monomer.

It localises to the nucleus. Functionally, general transcription factor that functions at the core of the DNA-binding multiprotein factor TFIID. Binding of TFIID to the TATA box is the initial transcriptional step of the pre-initiation complex (PIC), playing a role in the activation of eukaryotic genes transcribed by RNA polymerase II. This is TATA-box-binding protein (tbpA) from Dictyostelium discoideum (Social amoeba).